A 340-amino-acid chain; its full sequence is Ferrochelatase (340 aa).

The Fe cation site is built by His-189 and Glu-292.

The protein belongs to the ferrochelatase family.

It is found in the cytoplasm. It carries out the reaction heme b + 2 H(+) = protoporphyrin IX + Fe(2+). It participates in porphyrin-containing compound metabolism; protoheme biosynthesis; protoheme from protoporphyrin-IX: step 1/1. Its function is as follows. Catalyzes the ferrous insertion into protoporphyrin IX. The protein is Ferrochelatase of Pseudomonas fluorescens (strain ATCC BAA-477 / NRRL B-23932 / Pf-5).